A 92-amino-acid polypeptide reads, in one-letter code: Small ribosomal subunit protein uS19 (92 aa).

This sequence belongs to the universal ribosomal protein uS19 family.

Functionally, protein S19 forms a complex with S13 that binds strongly to the 16S ribosomal RNA. The chain is Small ribosomal subunit protein uS19 from Rhodospirillum rubrum (strain ATCC 11170 / ATH 1.1.1 / DSM 467 / LMG 4362 / NCIMB 8255 / S1).